The chain runs to 111 residues: Ribulose bisphosphate carboxylase small subunit (111 aa).

This sequence belongs to the RuBisCO small chain family. As to quaternary structure, heterohexadecamer of 8 large and 8 small subunits. The CcmM short form purifies from carboxysomes in complex with both RuBisCO subunits; a second complex with full-length CcmM and RuBisCO also includes carbonic anhydrase (CA, ccaA). RuBisCO-CcmM complexes are probably associated with the carboxysome shell. Isolated reduced and oxidized SSUL1 binds holo-RuBisCO (RbcL(8)-RbcS(8)) but not either subunit octamer alone; RuBisCO has a higher affinity for reduced SSUL1.

The protein resides in the carboxysome. RuBisCO catalyzes two reactions: the carboxylation of D-ribulose 1,5-bisphosphate, the primary event in carbon dioxide fixation, as well as the oxidative fragmentation of the pentose substrate in the photorespiration process. Both reactions occur simultaneously and in competition at the same active site. Its function is as follows. Beta-carboxysome assembly initiates when soluble RuBisCO aggregates is condensed into a liquid matrix in a pre-carboxysome by the RbcS-like domains of probably both CcmM58 and CcmM35. CcmN interacts with the N-terminus of CcmM58, and then recruits the CcmK2 major shell protein via CcmN's encapsulation peptide. Shell formation requires CcmK proteins and CcmO. CcmL caps the otherwise elongated carboxysome. Once fully encapsulated carboxysomes are formed, they migrate within the cell probably via interactions with the cytoskeleton. The sequence is that of Ribulose bisphosphate carboxylase small subunit from Synechococcus elongatus (strain ATCC 33912 / PCC 7942 / FACHB-805) (Anacystis nidulans R2).